The primary structure comprises 100 residues: Large ribosomal subunit protein uL23 (100 aa).

The protein belongs to the universal ribosomal protein uL23 family. As to quaternary structure, part of the 50S ribosomal subunit. Contacts protein L29, and trigger factor when it is bound to the ribosome.

In terms of biological role, one of the early assembly proteins it binds 23S rRNA. One of the proteins that surrounds the polypeptide exit tunnel on the outside of the ribosome. Forms the main docking site for trigger factor binding to the ribosome. This Escherichia coli O157:H7 protein is Large ribosomal subunit protein uL23.